Consider the following 313-residue polypeptide: MAFSFQLQQVFPFPVKFCSQPKSIKLQIFPNLTKRLPIHPLASAQNNATSNIDHNYIAMDESSINEEEVPLPTELSRELMPKHIAVIMDGNRRWAKRRGLPVALGYAAGIRVLRNFVKLSYNWGISALTLFAFSSENWFRPKAEVDLLMGLFDKVLKDELENLARTGIRLSIIGDASQLPKSLQDLIDKAVMATKANSRLHILVAINYSGQYDVVQACQTIAQRVKDGNIEPEDINSLLVEQELQTKCTEFPSPDLLIRTSGELRLSNFLLWQLAYTELFFSHSQWPDFGEAEFLEALCSFQQRQRRYGGQSS.

Residues 1-42 (MAFSFQLQQVFPFPVKFCSQPKSIKLQIFPNLTKRLPIHPLA) constitute a chloroplast transit peptide. Asp89 is an active-site residue.

The protein belongs to the UPP synthase family. Mg(2+) is required as a cofactor. In terms of tissue distribution, expressed in leaf trichomes, stem trichomes and old leaves. Expressed at low levels in young leaves and flowers.

It is found in the plastid. Its subcellular location is the chloroplast. The catalysed reaction is n isopentenyl diphosphate + (2E,6E)-farnesyl diphosphate = a di-trans,poly-cis-polyprenyl diphosphate + n diphosphate. In terms of biological role, catalyzes cis-prenyl chain elongation to produce the polyprenyl backbone of dolichol, a glycosyl carrier-lipid required for the biosynthesis of several classes of glycoprotein. The protein is Dehydrodolichyl diphosphate synthase CPT5, chloroplastic of Solanum lycopersicum (Tomato).